We begin with the raw amino-acid sequence, 568 residues long: Glycine--tRNA ligase (568 aa).

Arg-97 and Glu-163 together coordinate substrate. ATP-binding positions include 195-197 (RNE), 205-210 (IRLREF), 322-323 (EC), and 441-444 (GIDR). 210 to 214 (FTQAE) is a substrate binding site. A substrate-binding site is contributed by 437 to 441 (EPSFG).

Belongs to the class-II aminoacyl-tRNA synthetase family.

It localises to the cytoplasm. It carries out the reaction tRNA(Gly) + glycine + ATP = glycyl-tRNA(Gly) + AMP + diphosphate. Functionally, catalyzes the attachment of glycine to tRNA(Gly). The chain is Glycine--tRNA ligase from Pyrococcus furiosus (strain ATCC 43587 / DSM 3638 / JCM 8422 / Vc1).